Reading from the N-terminus, the 372-residue chain is N-methyl-L-tryptophan oxidase (372 aa).

4–34 (DLIIIGSGSVGAAAGYYATRAGLKVLMTDAH) is an FAD binding site. At C307 the chain carries S-8alpha-FAD cysteine.

The protein belongs to the MSOX/MTOX family. MTOX subfamily. As to quaternary structure, monomer. FAD is required as a cofactor.

The catalysed reaction is N(alpha)-methyl-L-tryptophan + O2 + H2O = L-tryptophan + formaldehyde + H2O2. Its function is as follows. Catalyzes the oxidative demethylation of N-methyl-L-tryptophan. This is N-methyl-L-tryptophan oxidase from Salmonella typhi.